Reading from the N-terminus, the 273-residue chain is tRNA pseudouridine synthase B (273 aa).

The Nucleophile role is filled by Asp-38.

Belongs to the pseudouridine synthase TruB family. Type 1 subfamily.

The catalysed reaction is uridine(55) in tRNA = pseudouridine(55) in tRNA. Its function is as follows. Responsible for synthesis of pseudouridine from uracil-55 in the psi GC loop of transfer RNAs. The protein is tRNA pseudouridine synthase B of Campylobacter curvus (strain 525.92).